Reading from the N-terminus, the 191-residue chain is Probable rho GDP-dissociation inhibitor (191 aa).

Positions 1–22 (MSDHENTGENTSEYQYKQPPQK) are disordered. Polar residues predominate over residues 8 to 21 (GENTSEYQYKQPPQ).

Belongs to the Rho GDI family.

Its subcellular location is the cytoplasm. Regulates the GDP/GTP exchange reaction of the Rho proteins by inhibiting the dissociation of GDP from them, and the subsequent binding of GTP to them. The protein is Probable rho GDP-dissociation inhibitor (rhi-1) of Caenorhabditis elegans.